A 243-amino-acid chain; its full sequence is 2-C-methyl-D-erythritol 4-phosphate cytidylyltransferase (243 aa).

This sequence belongs to the IspD/TarI cytidylyltransferase family. IspD subfamily.

The catalysed reaction is 2-C-methyl-D-erythritol 4-phosphate + CTP + H(+) = 4-CDP-2-C-methyl-D-erythritol + diphosphate. It functions in the pathway isoprenoid biosynthesis; isopentenyl diphosphate biosynthesis via DXP pathway; isopentenyl diphosphate from 1-deoxy-D-xylulose 5-phosphate: step 2/6. Functionally, catalyzes the formation of 4-diphosphocytidyl-2-C-methyl-D-erythritol from CTP and 2-C-methyl-D-erythritol 4-phosphate (MEP). In Chlorobium phaeovibrioides (strain DSM 265 / 1930) (Prosthecochloris vibrioformis (strain DSM 265)), this protein is 2-C-methyl-D-erythritol 4-phosphate cytidylyltransferase.